Consider the following 170-residue polypeptide: Probable inosine/xanthosine triphosphatase (170 aa).

Residue glutamate 31 participates in Mg(2+) binding.

Belongs to the YjjX NTPase family. Homodimer. The cofactor is Mg(2+). Requires Mn(2+) as cofactor.

The catalysed reaction is XTP + H2O = XDP + phosphate + H(+). It carries out the reaction ITP + H2O = IDP + phosphate + H(+). Phosphatase that hydrolyzes non-canonical purine nucleotides such as XTP and ITP to their respective diphosphate derivatives. Probably excludes non-canonical purines from DNA/RNA precursor pool, thus preventing their incorporation into DNA/RNA and avoiding chromosomal lesions. The sequence is that of Probable inosine/xanthosine triphosphatase from Oceanobacillus iheyensis (strain DSM 14371 / CIP 107618 / JCM 11309 / KCTC 3954 / HTE831).